The sequence spans 887 residues: Centrobin (887 aa).

The interval 1–34 (MATAAPSPSSPLRPEDLLSDSSEPPGLNQVSSEV) is disordered. Residue serine 81 is modified to Phosphoserine. Disordered stretches follow at residues 110-153 (MLHT…PSSS), 465-486 (SLRQ…LSGQ), 566-591 (TLLP…EKGE), and 636-695 (LGPP…LPPA). Residues 113–128 (TSRDTAYRTGSERREE) are compositionally biased toward basic and acidic residues. The span at 133–153 (SDSTATLLNTRPLQDLSPSSS) shows a compositional bias: polar residues. Positions 191–557 (RRKHCERHIQ…LQAMLQAHWE (367 aa)) form a coiled coil. The interval 360 to 887 (QEHQLKERLQ…SMRSRGGIWR (528 aa)) is required for centrosome localization. The segment covering 670 to 680 (TDDHRAERPFP) has biased composition (basic and acidic residues). Serine 782 bears the Phosphoserine mark. Residues 824–887 (GTDGQGELVP…SMRSRGGIWR (64 aa)) form a disordered region. The segment covering 832–849 (VPRRNTDSRLGETTRKEI) has biased composition (basic and acidic residues).

As to quaternary structure, interacts with LYST.

The protein resides in the cytoplasm. It localises to the cytoskeleton. Its subcellular location is the microtubule organizing center. The protein localises to the centrosome. It is found in the centriole. Required for centriole duplication. Inhibition of centriole duplication leading to defects in cytokinesis. The protein is Centrobin (Cntrob) of Mus musculus (Mouse).